Here is a 415-residue protein sequence, read N- to C-terminus: Methylthioribose-1-phosphate isomerase (415 aa).

The active-site Proton donor is Asp284.

The protein belongs to the eIF-2B alpha/beta/delta subunits family. MtnA subfamily.

The protein localises to the cytoplasm. The protein resides in the nucleus. The catalysed reaction is 5-(methylsulfanyl)-alpha-D-ribose 1-phosphate = 5-(methylsulfanyl)-D-ribulose 1-phosphate. It functions in the pathway amino-acid biosynthesis; L-methionine biosynthesis via salvage pathway; L-methionine from S-methyl-5-thio-alpha-D-ribose 1-phosphate: step 1/6. In terms of biological role, catalyzes the interconversion of methylthioribose-1-phosphate (MTR-1-P) into methylthioribulose-1-phosphate (MTRu-1-P). The chain is Methylthioribose-1-phosphate isomerase from Candida glabrata (strain ATCC 2001 / BCRC 20586 / JCM 3761 / NBRC 0622 / NRRL Y-65 / CBS 138) (Yeast).